A 203-amino-acid chain; its full sequence is Protein-methionine-sulfoxide reductase heme-binding subunit MsrQ (203 aa).

A run of 6 helical transmembrane segments spans residues 10 to 30 (IFVL…MGLL), 37 to 57 (IMMD…LSMT), 75 to 95 (LGLW…VFIL), 110 to 130 (PYII…VTSN), 147 to 167 (LVYV…RSDL), and 169 to 189 (EWAI…PPVW).

Belongs to the MsrQ family. As to quaternary structure, heterodimer of a catalytic subunit (MsrP) and a heme-binding subunit (MsrQ). The cofactor is FMN. It depends on heme b as a cofactor.

Its subcellular location is the cell inner membrane. Functionally, part of the MsrPQ system that repairs oxidized periplasmic proteins containing methionine sulfoxide residues (Met-O), using respiratory chain electrons. Thus protects these proteins from oxidative-stress damage caused by reactive species of oxygen and chlorine generated by the host defense mechanisms. MsrPQ is essential for the maintenance of envelope integrity under bleach stress, rescuing a wide series of structurally unrelated periplasmic proteins from methionine oxidation. MsrQ provides electrons for reduction to the reductase catalytic subunit MsrP, using the quinone pool of the respiratory chain. The polypeptide is Protein-methionine-sulfoxide reductase heme-binding subunit MsrQ (Pseudomonas entomophila (strain L48)).